The sequence spans 186 residues: Thioredoxin M2, chloroplastic (186 aa).

The transit peptide at 1–72 (MAAFTCTSRP…RVSRLRRAVV (72 aa)) directs the protein to the chloroplast. The Thioredoxin domain occupies 73 to 186 (CEAQETTTDI…LTSSLDKFLP (114 aa)). Residues Cys110 and Cys113 each act as nucleophile in the active site. Cys110 and Cys113 are disulfide-bonded.

Belongs to the thioredoxin family. Plant M-type subfamily. As to quaternary structure, interacts with G6PD1 and G6PD4. Interacts with PGL3.

It is found in the plastid. The protein localises to the chloroplast stroma. Thiol-disulfide oxidoreductase that may participate in various redox reactions. May activate NADP-malate dehydrogenase. This chain is Thioredoxin M2, chloroplastic, found in Arabidopsis thaliana (Mouse-ear cress).